The primary structure comprises 405 residues: Glucose-1-phosphate adenylyltransferase 1 (405 aa).

Residues Y96, G161, 176 to 177 (EK), and S194 contribute to the alpha-D-glucose 1-phosphate site.

Belongs to the bacterial/plant glucose-1-phosphate adenylyltransferase family. Homotetramer.

The catalysed reaction is alpha-D-glucose 1-phosphate + ATP + H(+) = ADP-alpha-D-glucose + diphosphate. The protein operates within glycan biosynthesis; glycogen biosynthesis. Involved in the biosynthesis of ADP-glucose, a building block required for the elongation reactions to produce glycogen. Catalyzes the reaction between ATP and alpha-D-glucose 1-phosphate (G1P) to produce pyrophosphate and ADP-Glc. This Vibrio cholerae serotype O1 (strain ATCC 39315 / El Tor Inaba N16961) protein is Glucose-1-phosphate adenylyltransferase 1.